Here is a 338-residue protein sequence, read N- to C-terminus: 3-dehydroquinate synthase (338 aa).

This sequence belongs to the archaeal-type DHQ synthase family.

It carries out the reaction 2-amino-2,3,7-trideoxy-D-lyxo-hept-6-ulosonate + NAD(+) + H2O = 3-dehydroquinate + NH4(+) + NADH + H(+). Functionally, catalyzes the oxidative deamination and cyclization of 2-amino-3,7-dideoxy-D-threo-hept-6-ulosonic acid (ADH) to yield 3-dehydroquinate (DHQ), which is fed into the canonical shikimic pathway of aromatic amino acid biosynthesis. The chain is 3-dehydroquinate synthase from Cenarchaeum symbiosum (strain A).